Reading from the N-terminus, the 190-residue chain is MASPDALINLTNQFLIAMPGMADSTFSGTVVYMCEHNERGALGLVINRPIDIDLATLFDKIDLKLEIHPLAEQSVYYGGPVQTERGFVLHDATGAYSSSLAVPGGLEMTTSKDVLEAVAQGGGPHRFILTLGYAGWSAGQLEDEISRNGWLTVQADPEIIFNVPPEERFAAALNLLGINPAMLSGEAGHA.

This sequence belongs to the UPF0301 (AlgH) family.

The sequence is that of UPF0301 protein Rpic_0619 from Ralstonia pickettii (strain 12J).